Reading from the N-terminus, the 864-residue chain is Probable M1 family aminopeptidase 1 (864 aa).

Residues Glu-149 and 289-293 (GAMEN) each bind substrate. His-325 serves as a coordination point for Zn(2+). Residue Glu-326 is the Proton acceptor of the active site. The Zn(2+) site is built by His-329 and Glu-348.

The protein belongs to the peptidase M1 family. Zn(2+) is required as a cofactor.

The protein is Probable M1 family aminopeptidase 1 of Encephalitozoon cuniculi (strain GB-M1) (Microsporidian parasite).